The sequence spans 394 residues: MQPRRIAILGSTGSIGTQAIDVVDGAPHLFEVVALSAGGGNLALLARQAVHTGAAAVGIAAGDPRELAVLIDEAAAAAGRSGYRPEIIAGPDASTRIAGLDADVVLNGITGSIGLAPTLAALKSGATLALANKESLIVGGSLVKAAARDGQIVPVDSEHSAIAQCLRSGSAAEVDKLVLTASGGPFRGRSGEELHGVTPQEALAHPTWDMGLMVTTNSATLVNKGLEVIEAHLLFDIPLDRIDVVVHPQSVVHSMVQFVDGSTIAQASPPDMRLPIALGLGWPGRVPNAAAPCDWTKAATWTFEPLDATAFPAVDLAKDAAKQGSTFPAVFNAANEEAVTAFHGGRIRFTDIVDTVDAVLSEHTGSSRLTVESVLDAESWARARAHERLAVSSL.

7 residues coordinate NADPH: Thr-12, Gly-13, Ser-14, Ile-15, Gly-38, Asn-41, and Asn-132. Lys-133 contacts 1-deoxy-D-xylulose 5-phosphate. Glu-134 lines the NADPH pocket. Residue Asp-156 participates in Mn(2+) binding. 1-deoxy-D-xylulose 5-phosphate-binding residues include Ser-157, Glu-158, Ser-182, and His-205. Glu-158 lines the Mn(2+) pocket. An NADPH-binding site is contributed by Gly-211. Residues Ser-218, Asn-223, Lys-224, and Glu-227 each contribute to the 1-deoxy-D-xylulose 5-phosphate site. Glu-227 contributes to the Mn(2+) binding site.

This sequence belongs to the DXR family. The cofactor is Mg(2+). Requires Mn(2+) as cofactor.

It catalyses the reaction 2-C-methyl-D-erythritol 4-phosphate + NADP(+) = 1-deoxy-D-xylulose 5-phosphate + NADPH + H(+). Its pathway is isoprenoid biosynthesis; isopentenyl diphosphate biosynthesis via DXP pathway; isopentenyl diphosphate from 1-deoxy-D-xylulose 5-phosphate: step 1/6. Catalyzes the NADPH-dependent rearrangement and reduction of 1-deoxy-D-xylulose-5-phosphate (DXP) to 2-C-methyl-D-erythritol 4-phosphate (MEP). This chain is 1-deoxy-D-xylulose 5-phosphate reductoisomerase, found in Pseudarthrobacter chlorophenolicus (strain ATCC 700700 / DSM 12829 / CIP 107037 / JCM 12360 / KCTC 9906 / NCIMB 13794 / A6) (Arthrobacter chlorophenolicus).